The following is a 340-amino-acid chain: 4-amino-5-hydroxymethyl-2-methylpyrimidine phosphate synthase THI13 (340 aa).

Lys62 is subject to N6-(pyridoxal phosphate)lysine. His66 is an active-site residue. Position 115-118 (115-118 (GEFG)) interacts with pyridoxal 5'-phosphate. The CCCFC; essential for catalytic activity, may be the site of iron coordination motif lies at 195–199 (CCCFC).

Belongs to the NMT1/THI5 family. As to quaternary structure, homodimer. Fe cation is required as a cofactor.

The catalysed reaction is N(6)-(pyridoxal phosphate)-L-lysyl-[4-amino-5-hydroxymethyl-2-methylpyrimidine phosphate synthase] + L-histidyl-[4-amino-5-hydroxymethyl-2-methylpyrimidine phosphate synthase] + 2 Fe(3+) + 4 H2O = L-lysyl-[4-amino-5-hydroxymethyl-2-methylpyrimidine phosphate synthase] + (2S)-2-amino-5-hydroxy-4-oxopentanoyl-[4-amino-5-hydroxymethyl-2-methylpyrimidine phosphate synthase] + 4-amino-2-methyl-5-(phosphooxymethyl)pyrimidine + 3-oxopropanoate + 2 Fe(2+) + 2 H(+). Its pathway is cofactor biosynthesis; thiamine diphosphate biosynthesis. Functionally, responsible for the formation of the pyrimidine heterocycle in the thiamine biosynthesis pathway. Catalyzes the formation of hydroxymethylpyrimidine phosphate (HMP-P) from histidine and pyridoxal phosphate (PLP). The protein uses PLP and the active site histidine to form HMP-P, generating an inactive enzyme. The enzyme can only undergo a single turnover, which suggests it is a suicide enzyme. This is 4-amino-5-hydroxymethyl-2-methylpyrimidine phosphate synthase THI13 from Saccharomyces cerevisiae (strain ATCC 204508 / S288c) (Baker's yeast).